Here is a 526-residue protein sequence, read N- to C-terminus: Protein DETOXIFICATION 43 (526 aa).

Residues M1–E36 lie on the Cytoplasmic side of the membrane. The helical transmembrane segment at I37–I57 threads the bilayer. Residues D58–T59 lie on the Extracellular side of the membrane. Residues A60–F80 form a helical membrane-spanning segment. Topologically, residues N81–T170 are cytoplasmic. The segment at I133–R166 is disordered. A compositionally biased stretch (polar residues) spans S134 to P144. The chain crosses the membrane as a helical span at residues A171 to F191. At S192–Y215 the chain is on the extracellular side. Residues L216–F236 traverse the membrane as a helical segment. The Cytoplasmic portion of the chain corresponds to R237–T244. Residues P245–L267 form a helical membrane-spanning segment. Over R268–G270 the chain is Extracellular. The helical transmembrane segment at I271–L293 threads the bilayer. Residues A294 to G316 lie on the Cytoplasmic side of the membrane. The chain crosses the membrane as a helical span at residues L317 to A337. Topologically, residues A338–Q353 are extracellular. Residues V354–A374 form a helical membrane-spanning segment. At C375–G396 the chain is on the cytoplasmic side. The chain crosses the membrane as a helical span at residues F397 to V417. The Extracellular segment spans residues F418–H426. Residues L427 to V447 form a helical membrane-spanning segment. The Cytoplasmic portion of the chain corresponds to L448–D457. Residues F458–Y478 form a helical membrane-spanning segment. Over M479–G484 the chain is Extracellular. Residues F485–A505 traverse the membrane as a helical segment. The Cytoplasmic segment spans residues R506 to S526.

Belongs to the multi antimicrobial extrusion (MATE) (TC 2.A.66.1) family. As to expression, expressed in roots in the pericycle and cells internal to the pericycle and surrounding the vascular tissue. Also expressed in seed and flower.

It is found in the cell membrane. Citrate transporter responsible for loading citrate into xylem tissues, which helps facilitate iron transport to shoots. Mediates the citrate release in the apoplastic spaces during plant development allowing iron nutrition between symplastically disconnected tissues. The protein is Protein DETOXIFICATION 43 of Arabidopsis thaliana (Mouse-ear cress).